Reading from the N-terminus, the 238-residue chain is Ethylene-responsive transcription factor ERN3 (238 aa).

A DNA-binding region (AP2/ERF) is located at residues 24–81; that stretch reads KFVGVRQRASGKWAAEIKDTSKNIRMWLGTYKTAEEAARAYDEAAFLLRGTNTRTNFS.

The protein belongs to the AP2/ERF transcription factor family. ERF subfamily. As to expression, expressed in roots, root hairs and leaves.

The protein resides in the nucleus. Functionally, transcription factor involved in symbiotic nodule signaling in response to rhizobial Nod factors (NFs). Binds to the GCC box (NF-responsive box) of ENOD11 promoter. May act as transcriptional repressor of NF-responsive box-containing target gene promoters in root hairs. The chain is Ethylene-responsive transcription factor ERN3 from Medicago truncatula (Barrel medic).